A 132-amino-acid polypeptide reads, in one-letter code: MSDIPSDLHYTAEHEWIRRSREDTVRVGLTDFAQSTLGDVVFVQLPEVGAELAAGKSFGEVESTKSVSDLYAPVSGTVSAVNTDLEGSPQLVNSDPYGAGWLLDVHVSDVGALESAIATLLDAETYRGTLTK.

Residues 24–106 (TVRVGLTDFA…YGAGWLLDVH (83 aa)) enclose the Lipoyl-binding domain. Lys65 is modified (N6-lipoyllysine).

Belongs to the GcvH family. In terms of assembly, the glycine cleavage system is composed of four proteins: P, T, L and H. (R)-lipoate serves as cofactor.

Functionally, the glycine cleavage system catalyzes the degradation of glycine. The H protein shuttles the methylamine group of glycine from the P protein to the T protein. This is Glycine cleavage system H protein from Mycobacterium leprae (strain Br4923).